A 241-amino-acid polypeptide reads, in one-letter code: Trypsin-1 (241 aa).

A signal peptide spans M1–V13. The propeptide at F14–K19 is activation peptide. The Peptidase S1 domain occupies I20 to A239. 6 cysteine pairs are disulfide-bonded: C26–C155, C44–C60, C128–C228, C135–C201, C166–C180, and C191–C215. Catalysis depends on charge relay system residues H59 and D103. S195 functions as the Charge relay system in the catalytic mechanism.

Belongs to the peptidase S1 family.

It localises to the secreted. The protein localises to the extracellular space. The catalysed reaction is Preferential cleavage: Arg-|-Xaa, Lys-|-Xaa.. The sequence is that of Trypsin-1 from Gadus morhua (Atlantic cod).